The chain runs to 232 residues: Probable phospholipid hydroperoxide glutathione peroxidase 6, mitochondrial (232 aa).

The N-terminal 54 residues, 1–54 (MLRSSIRLLYIRRTSPLLRSLSSSSSSSSSKRFDSAKPLFNSHRIISLPISTTG), are a transit peptide targeting the mitochondrion. Cys105 is a catalytic residue.

This sequence belongs to the glutathione peroxidase family. Expressed at a low but detectable level in leaves, stems, and flowers, but at a higher level in siliques and even higher in roots. Predominantly expressed in seeds.

It localises to the mitochondrion. The catalysed reaction is a hydroperoxy polyunsaturated fatty acid + 2 glutathione = a hydroxy polyunsaturated fatty acid + glutathione disulfide + H2O. Functionally, protects cells and enzymes from oxidative damage, by catalyzing the reduction of hydrogen peroxide, lipid peroxides and organic hydroperoxide, by glutathione. The chain is Probable phospholipid hydroperoxide glutathione peroxidase 6, mitochondrial (GPX6) from Arabidopsis thaliana (Mouse-ear cress).